The following is a 282-amino-acid chain: Putative lactoylglutathione lyase (282 aa).

Alanine 2 carries the N-acetylalanine modification. 2 VOC domains span residues 17 to 141 (RFLH…LIQR) and 147 to 274 (PLCQ…LVDN). Histidine 20 lines the Zn(2+) pocket. Arginine 24 serves as a coordination point for substrate. Zn(2+) is bound at residue glutamate 71. Substrate-binding residues include asparagine 75 and histidine 89. Residues histidine 89 and glutamate 137 each contribute to the Zn(2+) site. Glutamate 137 serves as the catalytic Proton donor/acceptor. 254–255 (LG) contributes to the substrate binding site.

It belongs to the glyoxalase I family. It depends on Zn(2+) as a cofactor.

The catalysed reaction is (R)-S-lactoylglutathione = methylglyoxal + glutathione. It functions in the pathway secondary metabolite metabolism; methylglyoxal degradation; (R)-lactate from methylglyoxal: step 1/2. Functionally, catalyzes the conversion of hemimercaptal, formed from methylglyoxal and glutathione, to S-lactoylglutathione. The protein is Putative lactoylglutathione lyase of Brassica oleracea var. gemmifera (Brussel sprouts).